A 20-amino-acid chain; its full sequence is Protein PR-L1 (20 aa).

The protein belongs to the BetVI family.

This is Protein PR-L1 from Lupinus luteus (European yellow lupine).